Here is a 196-residue protein sequence, read N- to C-terminus: Peptidyl-tRNA hydrolase (196 aa).

Y17 serves as a coordination point for tRNA. Catalysis depends on H22, which acts as the Proton acceptor. TRNA is bound by residues F68, N70, and N116.

The protein belongs to the PTH family. Monomer.

It is found in the cytoplasm. The enzyme catalyses an N-acyl-L-alpha-aminoacyl-tRNA + H2O = an N-acyl-L-amino acid + a tRNA + H(+). Functionally, hydrolyzes ribosome-free peptidyl-tRNAs (with 1 or more amino acids incorporated), which drop off the ribosome during protein synthesis, or as a result of ribosome stalling. Catalyzes the release of premature peptidyl moieties from peptidyl-tRNA molecules trapped in stalled 50S ribosomal subunits, and thus maintains levels of free tRNAs and 50S ribosomes. The sequence is that of Peptidyl-tRNA hydrolase from Yersinia pseudotuberculosis serotype O:1b (strain IP 31758).